The primary structure comprises 270 residues: Phosphatidylglycerol--prolipoprotein diacylglyceryl transferase (270 aa).

The next 7 membrane-spanning stretches (helical) occupy residues 14 to 34 (VIFE…LLGF), 60 to 80 (LLFN…VLFY), 95 to 115 (VWEG…AMLI), 128 to 148 (ADFV…GNFI), 176 to 196 (SQLY…NWYI), 202 to 222 (IGAT…IVEF), and 238 to 258 (ISMG…IMLV). Arginine 143 is a binding site for a 1,2-diacyl-sn-glycero-3-phospho-(1'-sn-glycerol).

The protein belongs to the Lgt family.

Its subcellular location is the cell inner membrane. The catalysed reaction is L-cysteinyl-[prolipoprotein] + a 1,2-diacyl-sn-glycero-3-phospho-(1'-sn-glycerol) = an S-1,2-diacyl-sn-glyceryl-L-cysteinyl-[prolipoprotein] + sn-glycerol 1-phosphate + H(+). It functions in the pathway protein modification; lipoprotein biosynthesis (diacylglyceryl transfer). Functionally, catalyzes the transfer of the diacylglyceryl group from phosphatidylglycerol to the sulfhydryl group of the N-terminal cysteine of a prolipoprotein, the first step in the formation of mature lipoproteins. This is Phosphatidylglycerol--prolipoprotein diacylglyceryl transferase from Pasteurella multocida (strain Pm70).